The sequence spans 156 residues: Small ribosomal subunit protein uS7 (156 aa).

Belongs to the universal ribosomal protein uS7 family. Part of the 30S ribosomal subunit. Contacts proteins S9 and S11.

One of the primary rRNA binding proteins, it binds directly to 16S rRNA where it nucleates assembly of the head domain of the 30S subunit. Is located at the subunit interface close to the decoding center, probably blocks exit of the E-site tRNA. The chain is Small ribosomal subunit protein uS7 from Dehalococcoides mccartyi (strain ATCC BAA-2100 / JCM 16839 / KCTC 5957 / BAV1).